A 120-amino-acid polypeptide reads, in one-letter code: Ribonuclease P protein component (120 aa).

This sequence belongs to the RnpA family. As to quaternary structure, consists of a catalytic RNA component (M1 or rnpB) and a protein subunit.

It carries out the reaction Endonucleolytic cleavage of RNA, removing 5'-extranucleotides from tRNA precursor.. Its function is as follows. RNaseP catalyzes the removal of the 5'-leader sequence from pre-tRNA to produce the mature 5'-terminus. It can also cleave other RNA substrates such as 4.5S RNA. The protein component plays an auxiliary but essential role in vivo by binding to the 5'-leader sequence and broadening the substrate specificity of the ribozyme. The sequence is that of Ribonuclease P protein component from Bordetella avium (strain 197N).